A 300-amino-acid chain; its full sequence is Diaminopimelate epimerase (300 aa).

Positions 15, 47, and 67 each coordinate substrate. Cys76 functions as the Proton donor in the catalytic mechanism. Substrate is bound by residues 77–78 (GN), Asn163, Asn197, and 215–216 (ER). The Proton acceptor role is filled by Cys224. 225–226 (GS) is a binding site for substrate. Residues 275–300 (SGTFDPATGEWSRDAQNDKPTDRGAA) form a disordered region. The span at 285 to 300 (WSRDAQNDKPTDRGAA) shows a compositional bias: basic and acidic residues.

It belongs to the diaminopimelate epimerase family. Homodimer.

It is found in the cytoplasm. It carries out the reaction (2S,6S)-2,6-diaminopimelate = meso-2,6-diaminopimelate. The protein operates within amino-acid biosynthesis; L-lysine biosynthesis via DAP pathway; DL-2,6-diaminopimelate from LL-2,6-diaminopimelate: step 1/1. In terms of biological role, catalyzes the stereoinversion of LL-2,6-diaminopimelate (L,L-DAP) to meso-diaminopimelate (meso-DAP), a precursor of L-lysine and an essential component of the bacterial peptidoglycan. The sequence is that of Diaminopimelate epimerase from Brucella anthropi (strain ATCC 49188 / DSM 6882 / CCUG 24695 / JCM 21032 / LMG 3331 / NBRC 15819 / NCTC 12168 / Alc 37) (Ochrobactrum anthropi).